The sequence spans 94 residues: Protein S100-A1 (94 aa).

EF-hand domains lie at 13 to 48 (INVF…FLDV) and 50 to 85 (KDAD…LTVA). Residues Lys28, Glu33, Asp63, Asn65, Asp67, Glu69, and Glu74 each contribute to the Ca(2+) site. The residue at position 86 (Cys86) is an S-nitrosocysteine.

This sequence belongs to the S-100 family. As to quaternary structure, dimer of either two alpha chains, or two beta chains, or one alpha and one beta chain. Also forms heterodimers with S100P. Interacts with AGER. Interacts with CAPZA1. Interacts with FKBP4. Interacts with RYR1 and RYR2. Interacts with CACYBP in a calcium-dependent manner. Interacts with PPP5C (via TPR repeats); the interaction is calcium-dependent and modulates PPP5C activity. Interacts with ATP2A2 and PLN in a Ca(2+)-dependent manner. Interacts with mitochondrial F1-ATPase subunits ATP5F1A and ATP5F1B; these interactions increase F1-ATPase activity. In terms of processing, glutathionylated; glutathionylation increases affinity to calcium about 10-fold. Although predominant among the water-soluble brain proteins, S100 is also found in a variety of other tissues.

It localises to the cytoplasm. Its subcellular location is the sarcoplasmic reticulum. The protein resides in the mitochondrion. Small calcium binding protein that plays important roles in several biological processes such as Ca(2+) homeostasis, chondrocyte biology and cardiomyocyte regulation. In response to an increase in intracellular Ca(2+) levels, binds calcium which triggers conformational changes. These changes allow interactions with specific target proteins and modulate their activity. Regulates a network in cardiomyocytes controlling sarcoplasmic reticulum Ca(2+) cycling and mitochondrial function through interaction with the ryanodine receptors RYR1 and RYR2, sarcoplasmic reticulum Ca(2+)-ATPase/ATP2A2 and mitochondrial F1-ATPase. Facilitates diastolic Ca(2+) dissociation and myofilament mechanics in order to improve relaxation during diastole. The chain is Protein S100-A1 (S100a1) from Rattus norvegicus (Rat).